Reading from the N-terminus, the 4655-residue chain is Low-density lipoprotein receptor-related protein 2 (4655 aa).

The signal sequence occupies residues Met1–Gly25. Residues Gln26–Thr4423 lie on the Extracellular side of the membrane. 7 consecutive LDL-receptor class A domains span residues Glu27–Ala63, Thr66–Ser104, Thr107–Gln143, Thr146–Thr180, Ile182–Asn218, Thr221–Glu257, and Lys265–Ser308. 21 disulfide bridges follow: Cys28-Cys40, Cys35-Cys53, Cys47-Cys62, Cys67-Cys80, Cys74-Cys93, Cys87-Cys103, Cys108-Cys120, Cys115-Cys133, Cys127-Cys142, Cys147-Cys157, Cys152-Cys170, Cys164-Cys179, Cys183-Cys195, Cys190-Cys208, Cys202-Cys217, Cys222-Cys234, Cys229-Cys247, Cys241-Cys256, Cys266-Cys279, Cys273-Cys292, and Cys286-Cys307. Asn159 and Asn178 each carry an N-linked (GlcNAc...) asparagine glycan. N-linked (GlcNAc...) asparagine glycosylation is found at Asn299, Asn300, Asn341, Asn388, and Asn463. 8 LDL-receptor class B repeats span residues Gln436–Asn478, Asn479–Val521, Gly522–Ser568, Lys569–Gln613, Ser753–Ser795, Lys796–Ala837, Gly838–Ala881, and Ser882–His925. Residue Asn866 is glycosylated (N-linked (GlcNAc...) asparagine). In terms of domain architecture, LDL-receptor class A 8 spans Gln1025 to Gly1061. Intrachain disulfides connect Cys1026–Cys1038, Cys1033–Cys1051, and Cys1045–Cys1060. An N-linked (GlcNAc...) asparagine glycan is attached at Asn1064. 7 consecutive LDL-receptor class A domains span residues Thr1066–Pro1102, Ser1108–Asn1144, Thr1148–Val1184, Asn1186–Pro1223, Met1229–Val1267, Thr1270–Pro1306, and Asp1304–Asn1349. 6 disulfides stabilise this stretch: Cys1067-Cys1079, Cys1074-Cys1092, Cys1086-Cys1101, Cys1109-Cys1121, Cys1116-Cys1134, and Cys1128-Cys1143. Residues Trp1126, Asp1129, Asp1131, Asp1133, Asp1139, and Glu1140 each coordinate Ca(2+). Asn1144 carries N-linked (GlcNAc...) asparagine glycosylation. 3 disulfides stabilise this stretch: Cys1149-Cys1161, Cys1156-Cys1174, and Cys1168-Cys1183. Asn1186 carries N-linked (GlcNAc...) asparagine glycosylation. 12 disulfides stabilise this stretch: Cys1187–Cys1200, Cys1194–Cys1213, Cys1207–Cys1222, Cys1230–Cys1243, Cys1237–Cys1256, Cys1250–Cys1266, Cys1271–Cys1283, Cys1278–Cys1296, Cys1290–Cys1305, Cys1305–Cys1325, Cys1312–Cys1338, and Cys1332–Cys1348. The Ca(2+) site is built by Asp1208, Val1210, Asp1212, Asp1218, and Glu1219. 3 N-linked (GlcNAc...) asparagine glycosylation sites follow: Asn1327, Asn1340, and Asn1383. The EGF-like 1; calcium-binding domain occupies Asp1390–Lys1429. Cystine bridges form between Cys1394–Cys1404, Cys1400–Cys1413, and Cys1415–Cys1428. Asn1464, Asn1496, and Asn1550 each carry an N-linked (GlcNAc...) asparagine glycan. LDL-receptor class B repeat units lie at residues Gly1478 to Gly1520, Arg1521 to Met1563, His1566 to Asn1609, Arg1610 to Ser1654, and Val1655 to Ser1695. Asn1675 carries N-linked (GlcNAc...) asparagine glycosylation. The EGF-like 2 domain maps to Ser1700–Leu1741. 3 disulfide bridges follow: Cys1704-Cys1713, Cys1709-Cys1725, and Cys1727-Cys1740. LDL-receptor class B repeat units lie at residues Gln1790–Ser1832, Arg1833–Arg1882, Gly1883–Glu1930, Gln1931–Phe1972, and Leu1973–Arg2013. An N-linked (GlcNAc...) asparagine glycan is attached at Asn1810. Asn2055 carries an N-linked (GlcNAc...) asparagine glycan. 9 LDL-receptor class B repeats span residues Gly2107 to Ala2156, Gly2157 to Asn2201, Arg2202 to Asp2245, Gly2246 to Ser2289, Asp2431 to Thr2477, Arg2478 to Gln2518, Gly2519 to Glu2562, Asp2563 to Tyr2604, and Ile2605 to Asn2646. N-linked (GlcNAc...) asparagine glycosylation is found at Asn2177 and Asn2224. N-linked (GlcNAc...) asparagine glycosylation is found at Asn2499 and Asn2547. LDL-receptor class A domains follow at residues Arg2699–Ala2737, Thr2740–Leu2776, Asp2779–Pro2818, Thr2821–Thr2860, Thr2863–Gly2900, Thr2905–Gln2944, Asn2947–Thr2989, Thr2992–Leu3028, Thr3031–His3069, and Thr3074–Gly3110. 18 disulfide bridges follow: Cys2700–Cys2712, Cys2707–Cys2725, Cys2719–Cys2736, Cys2741–Cys2753, Cys2748–Cys2766, Cys2760–Cys2775, Cys2780–Cys2793, Cys2788–Cys2806, Cys2800–Cys2817, Cys2822–Cys2835, Cys2829–Cys2848, Cys2842–Cys2859, Cys2864–Cys2876, Cys2871–Cys2889, Cys2883–Cys2899, Cys2906–Cys2918, Cys2913–Cys2931, and Cys2925–Cys2943. Asn2781 carries an N-linked (GlcNAc...) asparagine glycan. N-linked (GlcNAc...) asparagine glycosylation is found at Asn2809 and Asn2810. The N-linked (GlcNAc...) asparagine glycan is linked to Asn2947. 18 disulfide bridges follow: Cys2948–Cys2965, Cys2955–Cys2978, Cys2972–Cys2988, Cys2993–Cys3005, Cys3000–Cys3018, Cys3012–Cys3027, Cys3032–Cys3044, Cys3039–Cys3057, Cys3051–Cys3068, Cys3075–Cys3087, Cys3082–Cys3100, Cys3094–Cys3109, Cys3114–Cys3126, Cys3122–Cys3135, Cys3137–Cys3150, Cys3156–Cys3167, Cys3163–Cys3176, and Cys3178–Cys3191. Asn2987 carries N-linked (GlcNAc...) asparagine glycosylation. Residues Gly3110–Val3151 enclose the EGF-like 3 domain. Asn3125 is a glycosylation site (N-linked (GlcNAc...) asparagine). The EGF-like 4; calcium-binding domain occupies Asp3152–Arg3192. Asn3211, Asn3257, Asn3315, and Asn3355 each carry an N-linked (GlcNAc...) asparagine glycan. LDL-receptor class B repeat units lie at residues Lys3239–Ser3281, Arg3282–Arg3324, Gly3333–Asn3376, Asp3377–Thr3419, and Ile3420–Tyr3460. Asn3446 carries an N-linked (GlcNAc...) asparagine glycan. LDL-receptor class A domains lie at Met3511–Pro3549, Phe3552–Glu3590, His3593–Ala3631, Thr3634–Met3672, Leu3677–Glu3715, Thr3718–Ala3755, Glu3758–Glu3794, Thr3797–Pro3833, Tyr3841–Leu3879, Pro3882–Arg3921, and Pro3927–Asn3963. Disulfide bonds link Cys3512-Cys3525, Cys3519-Cys3538, Cys3532-Cys3548, Cys3553-Cys3565, Cys3560-Cys3578, Cys3572-Cys3589, Cys3594-Cys3606, Cys3601-Cys3619, Cys3613-Cys3630, Cys3635-Cys3647, Cys3642-Cys3660, Cys3654-Cys3671, Cys3678-Cys3692, Cys3686-Cys3705, Cys3699-Cys3714, Cys3719-Cys3732, Cys3727-Cys3745, Cys3739-Cys3754, Cys3759-Cys3771, Cys3766-Cys3784, Cys3778-Cys3793, Cys3798-Cys3810, Cys3805-Cys3823, Cys3817-Cys3832, Cys3842-Cys3854, Cys3849-Cys3867, Cys3861-Cys3878, Cys3883-Cys3896, Cys3891-Cys3909, Cys3903-Cys3920, Cys3928-Cys3940, Cys3935-Cys3953, and Cys3947-Cys3962. The N-linked (GlcNAc...) asparagine glycan is linked to Asn3564. Asn3680 is a glycosylation site (N-linked (GlcNAc...) asparagine). N-linked (GlcNAc...) asparagine glycosylation occurs at Asn3978. The region spanning Asp4007 to Ala4048 is the EGF-like 5; calcium-binding domain. Disulfide bonds link Cys4011-Cys4021, Cys4017-Cys4030, and Cys4032-Cys4047. The N-linked (GlcNAc...) asparagine glycan is linked to Asn4068. 3 LDL-receptor class B repeats span residues Arg4154–Leu4196, Gly4197–Asn4240, and Asp4242–Gln4283. Asn4327 carries N-linked (GlcNAc...) asparagine glycosylation. One can recognise an EGF-like 6 domain in the interval Leu4377–Glu4411. Disulfide bonds link Cys4381/Cys4389, Cys4383/Cys4399, and Cys4401/Cys4410. Residues Ala4424 to Phe4446 traverse the membrane as a helical segment. Over His4447–Val4655 the chain is Cytoplasmic. Residues Ser4453–Pro4462 carry the SH3-binding motif. The short motif at Pro4456–Leu4461 is the PxLPxI/L motif 1; mediates interaction with ANKRA2 element. The PxLPxI/L motif 2; mediates interaction with ANKRA2 motif lies at Pro4459 to Leu4464. Phosphoserine occurs at positions 4463 and 4466. An Endocytosis signal motif is present at residues Phe4521–Tyr4526. The tract at residues Lys4550–Gly4574 is disordered. Over residues Thr4565–Gly4574 the composition is skewed to polar residues. Ser4569 is subject to Phosphoserine. The interval Gln4589–Glu4602 is interaction with DAB2. The short motif at Asn4595–Tyr4598 is the NPXY motif element. The SH2-binding signature appears at Tyr4598 to Met4601. Residues Met4601–Val4655 form a disordered region. The short motif at Ala4611 to Lys4622 is the SH3-binding element. The segment covering Thr4612–Lys4624 has biased composition (pro residues). Residue Ser4616 is modified to Phosphoserine. A Phosphothreonine modification is found at Thr4632. Ser4653 is modified (phosphoserine).

Belongs to the LDLR family. In terms of assembly, binds plasminogen, extracellular matrix components, plasminogen activator-plasminogen activator inhibitor type I complex, apolipoprotein E-enriched beta-VLDL, lipoprotein lipase, lactoferrin, CLU/clusterin and calcium. Forms a multimeric complex together with LRPAP1. Interacts (via PxLPxI/L motif) with ANKRA2 (via ankyrin repeats). Interacts with LRP2BP. Interacts (via NPXY motif) with DAB2; the interaction is not affected by tyrosine phosphorylation of the NPXY motif. Interacts with MB. Interacts with BMP4. Interacts with the Sonic hedgehog protein N-product which is the active product of SHH. Interacts with CST3 in a calcium-dependent manner. Interacts with the vitamin-D binding protein GC/DBP. Interacts with sex hormone-binding protein SHBG. Interacts with angiotensin-2. Also interacts with angiotensin 1-7. Interacts with APOM. Interacts with selenoprotein SEPP1. Interacts with LEP. Interacts with ALB. Interacts with the antiapoptotic protein BIRC5/survivin. Interacts with matrix metalloproteinase MMP2 in complex with metalloproteinase inhibitor TIMP1. In neurons, forms a trimeric complex with APP and APPB1/FE65. Interacts with LDLRAP1/ARH; mediates trafficking of LRP2 to the endocytic recycling compartment. Does not interact with beta-amyloid protein 40 alone but interacts with the complex composed of beta-amyloid protein 40 and CLU/APOJ. Interacts with MDK. Post-translationally, a fraction undergoes proteolytic cleavage of the extracellular domain at the cell membrane to generate a cytoplasmic tail fragment. This is internalized into the early endosome from where it trafficks in an LDLRAP1/ARH-dependent manner to the endocytic recycling compartment (ERC). In the ERC, it is further cleaved by gamma-secretase to release a fragment which translocates to the nucleus and mediates transcriptional repression. In terms of processing, N-glycosylation is required for ligand binding. As to expression, expressed in first and third trimester cytotrophoblasts in the placenta (at protein level). Absorptive epithelia, including renal proximal tubules.

It localises to the apical cell membrane. The protein localises to the endosome lumen. It is found in the membrane. The protein resides in the coated pit. Its subcellular location is the cell projection. It localises to the dendrite. The protein localises to the axon. Multiligand endocytic receptor. Acts together with CUBN to mediate endocytosis of high-density lipoproteins. Mediates receptor-mediated uptake of polybasic drugs such as aprotinin, aminoglycosides and polymyxin B. In the kidney, mediates the tubular uptake and clearance of leptin. Also mediates transport of leptin across the blood-brain barrier through endocytosis at the choroid plexus epithelium. Endocytosis of leptin in neuronal cells is required for hypothalamic leptin signaling and leptin-mediated regulation of feeding and body weight. Mediates endocytosis and subsequent lysosomal degradation of CST3 in kidney proximal tubule cells. Mediates renal uptake of 25-hydroxyvitamin D3 in complex with the vitamin D3 transporter GC/DBP. Mediates renal uptake of metallothionein-bound heavy metals. Together with CUBN, mediates renal reabsorption of myoglobin. Mediates renal uptake and subsequent lysosomal degradation of APOM. Plays a role in kidney selenium homeostasis by mediating renal endocytosis of selenoprotein SEPP1. Mediates renal uptake of the antiapoptotic protein BIRC5/survivin which may be important for functional integrity of the kidney. Mediates renal uptake of matrix metalloproteinase MMP2 in complex with metalloproteinase inhibitor TIMP1. Mediates endocytosis of Sonic hedgehog protein N-product (ShhN), the active product of SHH. Also mediates ShhN transcytosis. In the embryonic neuroepithelium, mediates endocytic uptake and degradation of BMP4, is required for correct SHH localization in the ventral neural tube and plays a role in patterning of the ventral telencephalon. Required at the onset of neurulation to sequester SHH on the apical surface of neuroepithelial cells of the rostral diencephalon ventral midline and to control PTCH1-dependent uptake and intracellular trafficking of SHH. During neurulation, required in neuroepithelial cells for uptake of folate bound to the folate receptor FOLR1 which is necessary for neural tube closure. In the adult brain, negatively regulates BMP signaling in the subependymal zone which enables neurogenesis to proceed. In astrocytes, mediates endocytosis of ALB which is required for the synthesis of the neurotrophic factor oleic acid. Involved in neurite branching. During optic nerve development, required for SHH-mediated migration and proliferation of oligodendrocyte precursor cells. Mediates endocytic uptake and clearance of SHH in the retinal margin which protects retinal progenitor cells from mitogenic stimuli and keeps them quiescent. Plays a role in reproductive organ development by mediating uptake in reproductive tissues of androgen and estrogen bound to the sex hormone binding protein SHBG. Mediates endocytosis of angiotensin-2. Also mediates endocytosis of angiotensis 1-7. Binds to the complex composed of beta-amyloid protein 40 and CLU/APOJ and mediates its endocytosis and lysosomal degradation. Required for embryonic heart development. Required for normal hearing, possibly through interaction with estrogen in the inner ear. In Homo sapiens (Human), this protein is Low-density lipoprotein receptor-related protein 2.